The primary structure comprises 198 residues: Dual specificity protein phosphatase 13B (198 aa).

Positions 45-193 (HIDEVWPSLF…LQVLDNRLGR (149 aa)) constitute a Tyrosine-protein phosphatase domain. Cysteine 138 functions as the Phosphocysteine intermediate in the catalytic mechanism.

It belongs to the protein-tyrosine phosphatase family. Non-receptor class dual specificity subfamily. Highly expressed in the testis (at protein level). Also found in the skeletal muscle.

It carries out the reaction O-phospho-L-tyrosyl-[protein] + H2O = L-tyrosyl-[protein] + phosphate. The enzyme catalyses O-phospho-L-seryl-[protein] + H2O = L-seryl-[protein] + phosphate. It catalyses the reaction O-phospho-L-threonyl-[protein] + H2O = L-threonyl-[protein] + phosphate. Dual specificity phosphatase that dephosphorylates MAPK8/JNK and MAPK14/p38, but not MAPK1/ERK2, in vitro. Exhibits intrinsic phosphatase activity towards both phospho-seryl/threonyl and -tyrosyl residues, with similar specific activities in vitro. The protein is Dual specificity protein phosphatase 13B of Homo sapiens (Human).